A 361-amino-acid polypeptide reads, in one-letter code: Deoxyribonuclease-2-beta (361 aa).

The N-terminal stretch at 1–27 (MKQKMMARLLRTSFALLFLGLFGVLGA) is a signal peptide. N-linked (GlcNAc...) asparagine glycans are attached at residues asparagine 81, asparagine 103, asparagine 119, and asparagine 278.

It belongs to the DNase II family. In terms of tissue distribution, highly expressed in the eye lens and in salivary gland. Detected at lower levels in lung, prostate and lymph node. Isoform 2 is lung specific.

The protein localises to the lysosome. The enzyme catalyses Endonucleolytic cleavage to nucleoside 3'-phosphates and 3'-phosphooligonucleotide end-products.. Hydrolyzes DNA under acidic conditions. Does not require divalent cations for activity. Participates in the degradation of nuclear DNA during lens cell differentiation. This is Deoxyribonuclease-2-beta (DNASE2B) from Homo sapiens (Human).